The primary structure comprises 408 residues: Innexin-12 (408 aa).

A helical transmembrane segment spans residues Thr-29–Ile-49. Residue Asn-99 is glycosylated (N-linked (GlcNAc...) asparagine). Helical transmembrane passes span Gln-113–Trp-133, Val-197–Val-217, and Ile-284–Ile-304.

It belongs to the pannexin family.

It is found in the cell membrane. The protein resides in the cell junction. Its subcellular location is the gap junction. In terms of biological role, structural component of the gap junctions. Plays a role in oocyte directional transit in the spermatheca during ovulation by facilitating the directional propagation of the calcium signal in the spermatheca. Plays a role in male tail tip morphogenesis. The protein is Innexin-12 of Caenorhabditis elegans.